The chain runs to 100 residues: Vesicle-associated membrane protein 3 (100 aa).

An N-acetylserine modification is found at Ser-2. The Cytoplasmic portion of the chain corresponds to 2 to 77; that stretch reads STGPTAATGS…KRKYWWKNCK (76 aa). One can recognise a v-SNARE coiled-coil homology domain in the interval 14–74; that stretch reads RLQQTQNQVD…AKLKRKYWWK (61 aa). Residues Lys-66, Lys-68, and Lys-77 each participate in a glycyl lysine isopeptide (Lys-Gly) (interchain with G-Cter in ubiquitin) cross-link. The helical; Anchor for type IV membrane protein transmembrane segment at 78–98 threads the bilayer; it reads MWAIGITVLVIFIIIIIVWVV. At 99–100 the chain is on the vesicular side; it reads SS.

It belongs to the synaptobrevin family. In terms of assembly, interacts with POPDC1 (via the C-terminus cytoplasmic tail). Interacts with BCAP31; involved in VAMP3 export from the endoplasmic reticulum. Interacts with BAIAP3; this interaction is increased in the presence of calcium. Interacts with PICALM. Post-translationally, ubiquitinated by RNF167 at Lys-66, Lys-68 and Lys-77, regulating the recycling endosome pathway. In terms of processing, (Microbial infection) Targeted and hydrolyzed by C.botulinum neurotoxin type B (BoNT/B, botB) which hydrolyzes the 59-Gln-|-Phe-60 bond and probably inhibits neurotransmitter release. (Microbial infection) Targeted and hydrolyzed by C.botulinum neurotoxin type D (BoNT/D, botD) which hydrolyzes the 42-Lys-|-Leu-43 bond and probably inhibits neurotransmitter release. Note that humans are not known to be infected by C.botulinum type D. Post-translationally, (Microbial infection) Targeted and hydrolyzed by C.botulinum neurotoxin type F (BoNT/F, botF) which hydrolyzes the 41-Gln-|-Lys-42 bond and probably inhibits neurotransmitter release.

The protein localises to the early endosome membrane. The protein resides in the recycling endosome membrane. Its subcellular location is the synapse. It localises to the synaptosome. Its function is as follows. SNARE involved in vesicular transport from the late endosomes to the trans-Golgi network. The polypeptide is Vesicle-associated membrane protein 3 (VAMP3) (Homo sapiens (Human)).